Reading from the N-terminus, the 24-residue chain is Fraternine (24 aa).

An intrachain disulfide couples cysteine 11 to cysteine 24. Cysteine 24 is subject to Cysteine amide.

In terms of tissue distribution, expressed by the venom gland.

The protein localises to the secreted. In terms of biological role, wasp venom peptide that acts as a potent mast cell degranulating peptide without hemolytic activity. Shows neuroprotective effect, since it prevents the death of dopaminergic neurons of the brain substantia nigra region and recovers motor deficit in a 6-hydroxydopamine (6-OHDA)-induced murine model of Parkinson disease. The protein is Fraternine of Parachartergus fraternus (Artistic wasp).